A 231-amino-acid polypeptide reads, in one-letter code: tRNA (guanine-N(7)-)-methyltransferase (231 aa).

Residues glutamate 62, glutamate 87, aspartate 114, and aspartate 137 each contribute to the S-adenosyl-L-methionine site. Aspartate 137 is an active-site residue. Residues lysine 141, aspartate 173, and 210-213 (TKFE) contribute to the substrate site.

The protein belongs to the class I-like SAM-binding methyltransferase superfamily. TrmB family.

The catalysed reaction is guanosine(46) in tRNA + S-adenosyl-L-methionine = N(7)-methylguanosine(46) in tRNA + S-adenosyl-L-homocysteine. It functions in the pathway tRNA modification; N(7)-methylguanine-tRNA biosynthesis. Functionally, catalyzes the formation of N(7)-methylguanine at position 46 (m7G46) in tRNA. This chain is tRNA (guanine-N(7)-)-methyltransferase, found in Methylococcus capsulatus (strain ATCC 33009 / NCIMB 11132 / Bath).